The following is a 146-amino-acid chain: Large-conductance mechanosensitive channel (146 aa).

2 helical membrane passes run 12-32 and 88-108; these read AFAMKGNVVDMAVGVIIGGAF and LQATFDFLIIAFSIFLFIKLI.

This sequence belongs to the MscL family. As to quaternary structure, homopentamer.

The protein resides in the cell inner membrane. Its function is as follows. Channel that opens in response to stretch forces in the membrane lipid bilayer. May participate in the regulation of osmotic pressure changes within the cell. This chain is Large-conductance mechanosensitive channel, found in Bacteroides fragilis (strain ATCC 25285 / DSM 2151 / CCUG 4856 / JCM 11019 / LMG 10263 / NCTC 9343 / Onslow / VPI 2553 / EN-2).